The chain runs to 299 residues: Putative S-adenosyl-L-methionine-dependent methyltransferase MAB_0027c (299 aa).

S-adenosyl-L-methionine-binding positions include Asp-126 and 155–156; that span reads DL.

This sequence belongs to the UPF0677 family.

Exhibits S-adenosyl-L-methionine-dependent methyltransferase activity. The polypeptide is Putative S-adenosyl-L-methionine-dependent methyltransferase MAB_0027c (Mycobacteroides abscessus (strain ATCC 19977 / DSM 44196 / CCUG 20993 / CIP 104536 / JCM 13569 / NCTC 13031 / TMC 1543 / L948) (Mycobacterium abscessus)).